The following is a 350-amino-acid chain: Purine-binding protein BAB2_0673 (350 aa).

The N-terminal stretch at 1 to 17 (MVIATVAGFMLGGAAHA) is a signal peptide. Adenine-binding residues include Trp-36, Trp-185, and Asp-211.

The protein belongs to the BMP lipoprotein family.

Its function is as follows. Binds adenine and probably also other purines, such as guanine. May play a role in adenine and guanine uptake. May be part of an ABC-type uptake system for adenine and similar ligands. The sequence is that of Purine-binding protein BAB2_0673 from Brucella abortus (strain 2308).